Consider the following 353-residue polypeptide: MVQQPPQGGSRKISFNVSEQYEIQDVIGEGAYGVVCSAIHKPSGQKVAIKKITPFDHSMFCLRTLREMKLLRYFNHENIISILDIQRPRNYESFNEVYLIQELMETDMHRVIRTQDLSDDHCQYFIYQTLRALKAMHSANVLHRDLKPSNLLLNANCDLKVCDFGLARSAASTDDNSGFMTEYVATRWYRAPEIMLTFKEYTKAIDVWSVGCILAEMLSGKPLFPGKDYHHQLTLILDVLGTPTMEDYYGIKSRRAREYIRSLPFKKKIPFKALFPKSNELALDLLEKLLAFNPAKRITVEEALRHPYLEPYHDPDDEPTAPPIPEGFFDFDKNKDALSKEQLKTLIYEEIMR.

One can recognise a Protein kinase domain in the interval 21–309 (YEIQDVIGEG…VEEALRHPYL (289 aa)). Residues 27–35 (IGEGAYGVV) and lysine 50 each bind ATP. The Proton acceptor role is filled by aspartate 145.

This sequence belongs to the protein kinase superfamily. Ser/Thr protein kinase family. MAP kinase subfamily. Mg(2+) is required as a cofactor.

The protein localises to the nucleus. It catalyses the reaction L-seryl-[protein] + ATP = O-phospho-L-seryl-[protein] + ADP + H(+). The catalysed reaction is L-threonyl-[protein] + ATP = O-phospho-L-threonyl-[protein] + ADP + H(+). With respect to regulation, activated by threonine and tyrosine phosphorylation. In terms of biological role, mitogen-activated protein kinase (MAPK) that plays a role in conidiation and regulation of secondary metabolite biosynthesis. Acts as a repressor of dihydroxynaphthalene (DHN)-melanin production. This is Mitogen-activated protein kinase mpkB from Aspergillus fumigatus (strain CBS 144.89 / FGSC A1163 / CEA10) (Neosartorya fumigata).